The following is a 433-amino-acid chain: MQRMIQQFAAEYTSKTSSTQDPSQPNSTKNQSLPKASPVTTSPTAATTQNPVLSKLLMADQDSPLDLTVRKSQSEPSEQDGVLDLSTKKSPCASSTSLSHSPGCSSTQGNGRPGRPSQYRPDGLRSGDGVPPRSLQDGTREGFGHSTSLKVPLARSLQISEELLSRNQLSTAASLGPSGLQNHGQHLILSREASWAKPHYEFSLSRMKFRGNGALSNISDLPFLAENSAFPKMAHQTKQDGKRDMSHSSPVDLKIPQVRGMDLSWESRTGDQYSYSSLVMGSQTESALSKKLRAILPKQNRKSMLDAGPDSWGSDAEQSTSGQPYPTSDQEGDPGSKQPRKKRGRYRQYNSEILEEAISVVMSGKMSVSKAQSIYGIPHSTLEYKVKERLGTLKNPPKKKMKLMRSEGPDVSVKIELDPQGEAAQSANESKTE.

The disordered stretch occupies residues 1–147; the sequence is MQRMIQQFAA…GTREGFGHST (147 aa). Residues 13-34 are compositionally biased toward polar residues; the sequence is TSKTSSTQDPSQPNSTKNQSLP. The span at 36–48 shows a compositional bias: low complexity; sequence ASPVTTSPTAATT. S42 is subject to Phosphoserine. The Interaction with nuclear receptors signature appears at 53–57; the sequence is LSKLL. S63 bears the Phosphoserine mark. Residues 88–110 are compositionally biased toward polar residues; the sequence is KKSPCASSTSLSHSPGCSSTQGN. S249 is subject to Phosphoserine. A Glycyl lysine isopeptide (Lys-Gly) (interchain with G-Cter in SUMO2) cross-link involves residue K254. The disordered stretch occupies residues 299 to 348; it reads QNRKSMLDAGPDSWGSDAEQSTSGQPYPTSDQEGDPGSKQPRKKRGRYRQ. Polar residues predominate over residues 316–329; it reads AEQSTSGQPYPTSD. Positions 339-345 match the Nuclear localization signal motif; that stretch reads PRKKRGR. One can recognise an HTH psq-type domain in the interval 340-392; it reads RKKRGRYRQYNSEILEEAISVVMSGKMSVSKAQSIYGIPHSTLEYKVKERLGT. Positions 368 to 388 form a DNA-binding region, H-T-H motif; sequence VSKAQSIYGIPHSTLEYKVKE. Residues 393-412 are disordered; it reads LKNPPKKKMKLMRSEGPDVS. Residue K414 forms a Glycyl lysine isopeptide (Lys-Gly) (interchain with G-Cter in SUMO2) linkage.

As to quaternary structure, interacts with ESR1 and ESR2 in the presence of estradiol. Interacts with CTBP1, HDAC3 and HDAC6. Component of a large corepressor complex that contains about 20 proteins, including CTBP1, CTBP2, HDAC1 and HDAC2. As to expression, detected in heart and kidney.

Its subcellular location is the nucleus. Repressor of ligand-dependent transcription activation by various nuclear repressors. Repressor of ligand-dependent transcription activation by ESR1, ESR2, NR3C1, PGR, RARA, RARB, RARG, RXRA and VDR. May act as transcription activator that binds DNA elements with the sequence 5'-CCCTATCGATCGATCTCTACCT-3'. This is Ligand-dependent corepressor (Lcor) from Mus musculus (Mouse).